A 615-amino-acid polypeptide reads, in one-letter code: Sterol 3-beta-glucosyltransferase UGT80B1 (615 aa).

The disordered stretch occupies residues 1–54; the sequence is MASNVFDHPLQELEGEDNGVKSEKASLLETSGSVDTTPEDSGHRSSDGHRGLDH. The span at 40–54 shows a compositional bias: basic and acidic residues; the sequence is DSGHRSSDGHRGLDH.

This sequence belongs to the glycosyltransferase 28 family. In terms of tissue distribution, expressed in developing seeds, seedlings, leaves and around the apical tip of cotyledons. In embryo, expressed in the seed coat and cotyledons.

The enzyme catalyses a sterol + UDP-alpha-D-glucose = a sterol 3-beta-D-glucoside + UDP + H(+). Functionally, involved in the biosynthesis of sterol glucosides. Catalyzes the synthesis of steryl glycosides (SGs) and acyl steryl glycosides (ASGs) which are the most abundant sterol derivatives in higher plants. Can act on several sterols like sitosterol, campesterol and stigmasterol. Is required for embryonic development, seed suberin accumulation, cutin formation and flavanoid accumulation in the seed coat. Both UGT80A2 and UGT80B1 are required for the normal production of SGs and ASGs in seeds. The chain is Sterol 3-beta-glucosyltransferase UGT80B1 from Arabidopsis thaliana (Mouse-ear cress).